Reading from the N-terminus, the 401-residue chain is Tyrosine--tRNA ligase (401 aa).

Residues 45 to 54 (PTAPDLHLGH) carry the 'HIGH' region motif. The short motif at 230 to 234 (KMSKS) is the 'KMSKS' region element. An ATP-binding site is contributed by Lys-233. The S4 RNA-binding domain occupies 339–399 (IWLAKALVEC…GKRKFAKLKV (61 aa)).

Belongs to the class-I aminoacyl-tRNA synthetase family. TyrS type 2 subfamily. In terms of assembly, homodimer.

The protein resides in the cytoplasm. The catalysed reaction is tRNA(Tyr) + L-tyrosine + ATP = L-tyrosyl-tRNA(Tyr) + AMP + diphosphate + H(+). Catalyzes the attachment of tyrosine to tRNA(Tyr) in a two-step reaction: tyrosine is first activated by ATP to form Tyr-AMP and then transferred to the acceptor end of tRNA(Tyr). The chain is Tyrosine--tRNA ligase from Campylobacter jejuni (strain RM1221).